Consider the following 172-residue polypeptide: 3-hydroxydecanoyl-[acyl-carrier-protein] dehydratase (172 aa).

The active site involves His71.

The protein belongs to the thioester dehydratase family. FabA subfamily. As to quaternary structure, homodimer.

Its subcellular location is the cytoplasm. It catalyses the reaction a (3R)-hydroxyacyl-[ACP] = a (2E)-enoyl-[ACP] + H2O. The enzyme catalyses (3R)-hydroxydecanoyl-[ACP] = (2E)-decenoyl-[ACP] + H2O. The catalysed reaction is (2E)-decenoyl-[ACP] = (3Z)-decenoyl-[ACP]. It participates in lipid metabolism; fatty acid biosynthesis. Necessary for the introduction of cis unsaturation into fatty acids. Catalyzes the dehydration of (3R)-3-hydroxydecanoyl-ACP to E-(2)-decenoyl-ACP and then its isomerization to Z-(3)-decenoyl-ACP. Can catalyze the dehydratase reaction for beta-hydroxyacyl-ACPs with saturated chain lengths up to 16:0, being most active on intermediate chain length. In Aliivibrio salmonicida (strain LFI1238) (Vibrio salmonicida (strain LFI1238)), this protein is 3-hydroxydecanoyl-[acyl-carrier-protein] dehydratase.